We begin with the raw amino-acid sequence, 391 residues long: uncharacterized protein (391 aa).

The helical transmembrane segment at 4 to 24 threads the bilayer; it reads FALIVGIVALAIFSFLYIQLY.

The protein resides in the membrane. This is an uncharacterized protein from Haemophilus influenzae (strain ATCC 51907 / DSM 11121 / KW20 / Rd).